A 65-amino-acid polypeptide reads, in one-letter code: Trypsin inhibitor (65 aa).

As to quaternary structure, homotrimer.

The sequence is that of Trypsin inhibitor from Zea mays (Maize).